The sequence spans 249 residues: Coproheme decarboxylase (249 aa).

Residues R131, 145–149 (YPMDK), H172, and Q185 each bind Fe-coproporphyrin III. Y145 is an active-site residue.

It belongs to the ChdC family. Type 1 subfamily. Fe-coproporphyrin III is required as a cofactor.

The catalysed reaction is Fe-coproporphyrin III + 2 H2O2 + 2 H(+) = heme b + 2 CO2 + 4 H2O. The enzyme catalyses Fe-coproporphyrin III + H2O2 + H(+) = harderoheme III + CO2 + 2 H2O. It carries out the reaction harderoheme III + H2O2 + H(+) = heme b + CO2 + 2 H2O. The protein operates within porphyrin-containing compound metabolism; protoheme biosynthesis. Its function is as follows. Involved in coproporphyrin-dependent heme b biosynthesis. Catalyzes the decarboxylation of Fe-coproporphyrin III (coproheme) to heme b (protoheme IX), the last step of the pathway. The reaction occurs in a stepwise manner with a three-propionate intermediate. The polypeptide is Coproheme decarboxylase (Staphylococcus epidermidis (strain ATCC 12228 / FDA PCI 1200)).